A 720-amino-acid polypeptide reads, in one-letter code: Catalase-peroxidase (720 aa).

The tryptophyl-tyrosyl-methioninium (Trp-Tyr) (with M-248) cross-link spans 94 to 222 (WHAAGTYRIA…LAAVTMGLIY (129 aa)). The active-site Proton acceptor is the His95. Residues 222 to 248 (YVNPEGVDGNPDPLKTAHDVRVTFARM) constitute a cross-link (tryptophyl-tyrosyl-methioninium (Tyr-Met) (with W-94)). His263 contacts heme b.

It belongs to the peroxidase family. Peroxidase/catalase subfamily. In terms of assembly, homodimer. Heme b serves as cofactor. Formation of the three residue Trp-Tyr-Met cross-link is important for the catalase, but not the peroxidase activity of the enzyme.

The catalysed reaction is H2O2 + AH2 = A + 2 H2O. The enzyme catalyses 2 H2O2 = O2 + 2 H2O. In terms of biological role, bifunctional enzyme with both catalase and broad-spectrum peroxidase activity. The polypeptide is Catalase-peroxidase (Synechococcus elongatus (strain ATCC 33912 / PCC 7942 / FACHB-805) (Anacystis nidulans R2)).